Here is a 376-residue protein sequence, read N- to C-terminus: Putative glutamate--cysteine ligase 2 (376 aa).

It belongs to the glutamate--cysteine ligase type 2 family. YbdK subfamily.

The catalysed reaction is L-cysteine + L-glutamate + ATP = gamma-L-glutamyl-L-cysteine + ADP + phosphate + H(+). In terms of biological role, ATP-dependent carboxylate-amine ligase which exhibits weak glutamate--cysteine ligase activity. The sequence is that of Putative glutamate--cysteine ligase 2 from Mycobacterium bovis (strain ATCC BAA-935 / AF2122/97).